A 281-amino-acid polypeptide reads, in one-letter code: Voltage-dependent L-type calcium channel subunit alpha-1S (281 aa).

An III repeat occupies 1–8 (VGFVIVTF). Residues 1–17 (VGFVIVTFQEQGESEYK) are dihydropyridine binding. Residues 45 to 281 (NPYQYQIWYV…TCGTGFAYFY (237 aa)) form an IV repeat. Residues 59 to 80 (YFEYLMFFLIMLNTICLGMQHY) form a helical membrane-spanning segment. Asparagine 81 carries an N-linked (GlcNAc...) asparagine glycan. A helical membrane pass occupies residues 89 to 110 (VSDILNVAFTVLFTLEMILKLM). The chain crosses the membrane as a helical span at residues 121 to 140 (PWNVFDFLIVIGSIIDVILS). A helical membrane pass occupies residues 153-171 (ITFFRLFRVMRLVKLLSRG). Residues 190–210 (YVALLIVMLFFIYAVIGMQMF) traverse the membrane as a helical segment. Positions 233–251 (AVLLLFRCATGEAWQEILL) form an intramembrane region, pore-forming. The short motif at 242-245 (TGEA) is the Selectivity filter of repeat IV element. A dihydropyridine binding region spans residues 258–281 (RCDPESDYAEGEEYTCGTGFAYFY). A disulfide bond links cysteine 259 and cysteine 273. A phenylalkylamine binding region spans residues 270-281 (EYTCGTGFAYFY).

The protein belongs to the calcium channel alpha-1 subunit (TC 1.A.1.11) family. CACNA1S subfamily. Component of a calcium channel complex consisting of a pore-forming alpha subunit (CACNA1S) and the ancillary subunits CACNB1 or CACNB2, CACNG1 and CACNA2D1. The channel complex contains alpha, beta, gamma and delta subunits in a 1:1:1:1 ratio, i.e. it contains either CACNB1 or CACNB2. CACNA1S channel activity is modulated by the auxiliary subunits (CACNB1 or CACNB2, CACNG1 and CACNA2D1). Interacts with DYSF and JSRP1. Interacts with RYR1. Interacts with CALM. Post-translationally, the alpha-1S subunit is found in two isoforms in the skeletal muscle: a minor form of 212 kDa containing the complete amino acid sequence, and a major form of 190 kDa derived from the full-length form by post-translational proteolysis close to Phe-1690. Both the minor and major forms are phosphorylated in vitro by PKA. Phosphorylation by PKA activates the calcium channel.

It is found in the cell membrane. Its subcellular location is the sarcolemma. It localises to the T-tubule. The catalysed reaction is Ca(2+)(in) = Ca(2+)(out). With respect to regulation, channel activity is blocked by dihydropyridines (DHP), phenylalkylamines, and by benzothiazepines. In terms of biological role, pore-forming, alpha-1S subunit of the voltage-gated calcium channel that gives rise to L-type calcium currents in skeletal muscle. Calcium channels containing the alpha-1S subunit play an important role in excitation-contraction coupling in skeletal muscle via their interaction with RYR1, which triggers Ca(2+) release from the sarcplasmic reticulum and ultimately results in muscle contraction. Long-lasting (L-type) calcium channels belong to the 'high-voltage activated' (HVA) group. In Gallus gallus (Chicken), this protein is Voltage-dependent L-type calcium channel subunit alpha-1S (CACNA1S).